The chain runs to 289 residues: Oxaloacetate decarboxylase (289 aa).

S50 provides a ligand contact to substrate. Residue D88 participates in Mg(2+) binding. The substrate site is built by R159 and H235.

It belongs to the isocitrate lyase/PEP mutase superfamily. Oxaloacetate decarboxylase family. In terms of assembly, homotetramer; dimer of dimers. Requires Mg(2+) as cofactor.

The enzyme catalyses oxaloacetate + H(+) = pyruvate + CO2. In terms of biological role, catalyzes the decarboxylation of oxaloacetate into pyruvate. Seems to play a role in maintaining cellular concentrations of bicarbonate and pyruvate. The chain is Oxaloacetate decarboxylase from Pseudomonas entomophila (strain L48).